Consider the following 1067-residue polypeptide: SURP and G-patch domain-containing protein 2 (1067 aa).

Ser-93 is subject to Phosphoserine. Residues 177 to 189 (KESRDYDLDHPGE) are compositionally biased toward basic and acidic residues. Positions 177-199 (KESRDYDLDHPGEVDSVSRSSGQ) are disordered. Phosphoserine is present on Ser-206. Lys-219 participates in a covalent cross-link: Glycyl lysine isopeptide (Lys-Gly) (interchain with G-Cter in SUMO2). At Thr-265 the chain carries Phosphothreonine. 2 positions are modified to phosphoserine: Ser-267 and Ser-586. The stretch at 573 to 616 (IDQLVMRVIQGRLSPRERTLLLQDPAYWFLSDESSLEYKYYKLK) is one SURP motif 1 repeat. Residues 668-767 (SQGPRGLKAK…CPSANMDAKT (100 aa)) are disordered. The segment covering 680–691 (TTAQQTSLSSGT) has biased composition (polar residues). Ser-740 carries the phosphoserine modification. Thr-744 is subject to Phosphothreonine. Residues 770-813 (TAEKLARFVAQVGPEIEQFSIENSTDNPDLWFLHDQSSSAFKFY) form an SURP motif 2 repeat. The span at 825–840 (SFQSTGEAGDSVQSPT) shows a compositional bias: polar residues. 2 disordered regions span residues 825–944 (SFQS…KSLK) and 967–991 (RIAYDRPRGRPIAKKKKPKDMEFSQ). Ser-838 is modified (phosphoserine). Residues 843-856 (KEGKGEPQEGHPEQ) are compositionally biased toward basic and acidic residues. Over residues 866-883 (LPEEEEEDEEESEDEGGE) the composition is skewed to acidic residues. The segment covering 919–931 (ASTPGLSQASSGS) has biased composition (polar residues). Residues 975 to 984 (GRPIAKKKKP) show a composition bias toward basic residues. Positions 980 to 985 (KKKKPK) match the Nuclear localization signal motif. In terms of domain architecture, G-patch spans 996 to 1042 (DKNVGFQMLQKMGWKEGHGLGSLGKGIREPVSVGALSEGEGLGADGP).

The protein resides in the nucleus. Functionally, may play a role in mRNA splicing. The polypeptide is SURP and G-patch domain-containing protein 2 (Sugp2) (Mus musculus (Mouse)).